Reading from the N-terminus, the 680-residue chain is HEAT repeat-containing protein 3 (680 aa).

The segment covering 1–11 has biased composition (basic residues); the sequence is MGKSRTKRFKR. Residues 1–39 form a disordered region; sequence MGKSRTKRFKRPQFSPTGDCQAEAAAAANGTGGEEDDGP. Ser-15 is modified (phosphoserine). Residues 18–29 show a composition bias toward low complexity; that stretch reads GDCQAEAAAAAN. 2 HEAT repeats span residues 38–69 and 74–110; these read GPAA…VQQR and GLAR…SACG. Ser-144 is subject to Phosphoserine. Thr-340 is subject to Phosphothreonine.

It belongs to the nuclear import and ribosome assembly adapter family. Component of a hexameric 5S RNP precursor complex, composed of 5S RNA, RRS1, RPF2/BXDC1, RPL5, RPL11 and HEATR3; this complex acts as a precursor for ribosome assembly.

Functionally, plays a role in ribosome biogenesis and in nuclear import of the 60S ribosomal protein L5/large ribosomal subunit protein uL18 (RPL5). Required for proper erythrocyte maturation. The chain is HEAT repeat-containing protein 3 (HEATR3) from Homo sapiens (Human).